The sequence spans 317 residues: Lipoyl synthase (317 aa).

Residues Cys-56, Cys-61, Cys-67, Cys-82, Cys-86, Cys-89, and Ser-298 each contribute to the [4Fe-4S] cluster site. The Radical SAM core domain occupies 68–287 (WEDREATFLI…KEEAEQIGFS (220 aa)).

Belongs to the radical SAM superfamily. Lipoyl synthase family. [4Fe-4S] cluster serves as cofactor.

The protein localises to the cytoplasm. It catalyses the reaction [[Fe-S] cluster scaffold protein carrying a second [4Fe-4S](2+) cluster] + N(6)-octanoyl-L-lysyl-[protein] + 2 oxidized [2Fe-2S]-[ferredoxin] + 2 S-adenosyl-L-methionine + 4 H(+) = [[Fe-S] cluster scaffold protein] + N(6)-[(R)-dihydrolipoyl]-L-lysyl-[protein] + 4 Fe(3+) + 2 hydrogen sulfide + 2 5'-deoxyadenosine + 2 L-methionine + 2 reduced [2Fe-2S]-[ferredoxin]. Its pathway is protein modification; protein lipoylation via endogenous pathway; protein N(6)-(lipoyl)lysine from octanoyl-[acyl-carrier-protein]: step 2/2. Its function is as follows. Catalyzes the radical-mediated insertion of two sulfur atoms into the C-6 and C-8 positions of the octanoyl moiety bound to the lipoyl domains of lipoate-dependent enzymes, thereby converting the octanoylated domains into lipoylated derivatives. The protein is Lipoyl synthase of Streptomyces coelicolor (strain ATCC BAA-471 / A3(2) / M145).